The primary structure comprises 276 residues: F-actin-capping protein subunit beta (276 aa).

This sequence belongs to the F-actin-capping protein beta subunit family. As to quaternary structure, component of the F-actin capping complex, composed of a heterodimer of an alpha and a beta subunit. Subunit of dynactin, a multiprotein complex part of a tripartite complex with dynein and a adapter, such as BICDL1, BICD2 or HOOK3.

It localises to the cytoplasm. The protein localises to the cytoskeleton. In terms of biological role, F-actin-capping proteins bind in a Ca(2+)-independent manner to the fast growing ends of actin filaments (barbed end) thereby blocking the exchange of subunits at these ends. Unlike other capping proteins (such as gelsolin and severin), these proteins do not sever actin filaments. Forms, with CAPZB, the barbed end of the fast growing ends of actin filaments in the dynactin complex and stabilizes dynactin structure. The dynactin multiprotein complex activates the molecular motor dynein for ultra-processive transport along microtubules. This chain is F-actin-capping protein subunit beta (cpb), found in Drosophila melanogaster (Fruit fly).